A 760-amino-acid polypeptide reads, in one-letter code: Catecholate siderophore receptor Fiu (760 aa).

The signal sequence occupies residues 1 to 31 (MENNRNFPARQFHSLTFFAGLCIGITPVAQA). A TBDR plug domain is found at 67 to 175 (PVADTTRTMT…PTGSINMISK (109 aa)). Residues 180 to 760 (DSGIDASASI…TFLLTANMHF (581 aa)) form the TBDR beta-barrel domain. The TonB C-terminal box motif lies at 743-760 (RYHPGEPRTFLLTANMHF).

Belongs to the TonB-dependent receptor family.

It localises to the cell outer membrane. Its function is as follows. Involved in the active transport across the outer membrane of iron complexed with catecholate siderophores such as dihydroxybenzoylserine and dihydroxybenzoate. It derives its energy for transport by interacting with the trans-periplasmic membrane protein TonB. Can also transport catechol-substituted cephalosporins. Receptor for microcins M, H47 and E492. The sequence is that of Catecholate siderophore receptor Fiu (fiu) from Escherichia coli (strain UTI89 / UPEC).